The primary structure comprises 243 residues: Phosphoribosyl isomerase A (243 aa).

The active-site Proton acceptor is aspartate 9. The active-site Proton donor is the aspartate 128.

It belongs to the HisA/HisF family.

Its subcellular location is the cytoplasm. It catalyses the reaction 1-(5-phospho-beta-D-ribosyl)-5-[(5-phospho-beta-D-ribosylamino)methylideneamino]imidazole-4-carboxamide = 5-[(5-phospho-1-deoxy-D-ribulos-1-ylimino)methylamino]-1-(5-phospho-beta-D-ribosyl)imidazole-4-carboxamide. The catalysed reaction is N-(5-phospho-beta-D-ribosyl)anthranilate = 1-(2-carboxyphenylamino)-1-deoxy-D-ribulose 5-phosphate. The protein operates within amino-acid biosynthesis; L-histidine biosynthesis; L-histidine from 5-phospho-alpha-D-ribose 1-diphosphate: step 4/9. It functions in the pathway amino-acid biosynthesis; L-tryptophan biosynthesis; L-tryptophan from chorismate: step 3/5. In terms of biological role, involved in both the histidine and tryptophan biosynthetic pathways. This is Phosphoribosyl isomerase A from Mycobacterium avium (strain 104).